The following is a 377-amino-acid chain: UPF0754 membrane protein GTNG_0550 (377 aa).

Transmembrane regions (helical) follow at residues 7 to 27 (LLFMMAVGALIGGMTNFIAIV) and 357 to 377 (YLGALLGAMIGAVQGIIGLWL).

Belongs to the UPF0754 family.

It localises to the cell membrane. This is UPF0754 membrane protein GTNG_0550 from Geobacillus thermodenitrificans (strain NG80-2).